The following is a 334-amino-acid chain: Holliday junction branch migration complex subunit RuvB (334 aa).

Residues 1 to 182 (MNERMVDQSM…FGVHLRLEYY (182 aa)) are large ATPase domain (RuvB-L). ATP-binding positions include Leu-21, Arg-22, Gly-63, Lys-66, Thr-67, Thr-68, 129–131 (EDF), Arg-172, Tyr-182, and Arg-219. Residue Thr-67 participates in Mg(2+) binding. The segment at 183–253 (NESDLKEIII…TTKHALGLLQ (71 aa)) is small ATPAse domain (RuvB-S). The interval 256–334 (QHGLDYIDHK…HFAKSNEERG (79 aa)) is head domain (RuvB-H). DNA is bound by residues Arg-292, Arg-311, and Arg-316.

This sequence belongs to the RuvB family. Homohexamer. Forms an RuvA(8)-RuvB(12)-Holliday junction (HJ) complex. HJ DNA is sandwiched between 2 RuvA tetramers; dsDNA enters through RuvA and exits via RuvB. An RuvB hexamer assembles on each DNA strand where it exits the tetramer. Each RuvB hexamer is contacted by two RuvA subunits (via domain III) on 2 adjacent RuvB subunits; this complex drives branch migration. In the full resolvosome a probable DNA-RuvA(4)-RuvB(12)-RuvC(2) complex forms which resolves the HJ.

It localises to the cytoplasm. The enzyme catalyses ATP + H2O = ADP + phosphate + H(+). Functionally, the RuvA-RuvB-RuvC complex processes Holliday junction (HJ) DNA during genetic recombination and DNA repair, while the RuvA-RuvB complex plays an important role in the rescue of blocked DNA replication forks via replication fork reversal (RFR). RuvA specifically binds to HJ cruciform DNA, conferring on it an open structure. The RuvB hexamer acts as an ATP-dependent pump, pulling dsDNA into and through the RuvAB complex. RuvB forms 2 homohexamers on either side of HJ DNA bound by 1 or 2 RuvA tetramers; 4 subunits per hexamer contact DNA at a time. Coordinated motions by a converter formed by DNA-disengaged RuvB subunits stimulates ATP hydrolysis and nucleotide exchange. Immobilization of the converter enables RuvB to convert the ATP-contained energy into a lever motion, pulling 2 nucleotides of DNA out of the RuvA tetramer per ATP hydrolyzed, thus driving DNA branch migration. The RuvB motors rotate together with the DNA substrate, which together with the progressing nucleotide cycle form the mechanistic basis for DNA recombination by continuous HJ branch migration. Branch migration allows RuvC to scan DNA until it finds its consensus sequence, where it cleaves and resolves cruciform DNA. This is Holliday junction branch migration complex subunit RuvB from Staphylococcus aureus (strain N315).